A 474-amino-acid chain; its full sequence is Tubulin gamma-1 chain (474 aa).

Position 142–148 (alanine 142–glycine 148) interacts with GTP.

This sequence belongs to the tubulin family. Gamma-tubulin complex is composed of gamma-tubulin and GCP proteins.

It is found in the cytoplasm. The protein resides in the cytoskeleton. Its subcellular location is the microtubule organizing center. The protein localises to the nucleus. It localises to the cell cortex. Its function is as follows. Tubulin is the major constituent of microtubules. The gamma chain is found at microtubule organizing centers (MTOC) such as the spindle poles, suggesting that it is involved in the minus-end nucleation of microtubule assembly. In terms of biological role, gamma-tubulin complex is essential for the control of microtubular network remodeling in the course of initiation and development of giant-feeding cells, and for the successful reproduction of nematodes (e.g. Meloidogyne spp.) in their plant hosts. The protein is Tubulin gamma-1 chain (TUBG1) of Arabidopsis thaliana (Mouse-ear cress).